A 152-amino-acid chain; its full sequence is MLCPHCHHNGSRVIDSRPAEDGMSIRRRRECVNCGFRFTTFERYEETPLLVVKKDGTREEFNRQKILNGLVRSAEKRPVSMDKLTKIADHVEARVRRLGENEVSSQVIGEFVMNELKPVDEIAYIRFASVYRQFKDVDAFFKEIESMKKEER.

A zinc finger spans residues 3–34; the sequence is CPHCHHNGSRVIDSRPAEDGMSIRRRRECVNC. An ATP-cone domain is found at 49–139; the sequence is LLVVKKDGTR…VYRQFKDVDA (91 aa).

Belongs to the NrdR family. It depends on Zn(2+) as a cofactor.

Its function is as follows. Negatively regulates transcription of bacterial ribonucleotide reductase nrd genes and operons by binding to NrdR-boxes. The protein is Transcriptional repressor NrdR of Limosilactobacillus fermentum (strain NBRC 3956 / LMG 18251) (Lactobacillus fermentum).